Here is a 228-residue protein sequence, read N- to C-terminus: Ran-binding protein 1 homolog a (228 aa).

The span at 1–13 (MATNEPEHEHRDE) shows a compositional bias: basic and acidic residues. Disordered stretches follow at residues 1–30 (MATNEPEHEHRDEEEAGANEDEDTGAQVAP) and 159–228 (SEEE…GPST). Residues 14-24 (EEAGANEDEDT) are compositionally biased toward acidic residues. Residues 27–162 (QVAPIVRLEE…FKEVAESEEE (136 aa)) form the RanBD1 domain. The span at 179–228 (LTVEETKTEEKTEAKAVETAKTEVKAEEKKESEAEKSGEAKKTEESGPST) shows a compositional bias: basic and acidic residues.

As to quaternary structure, interacts with the GTP-bound form of RAN1, RAN2 and RAN3. As to expression, ubiquitous. Preferentially expressed in root tips and gynoecium.

It is found in the nucleus. The protein resides in the nuclear pore complex. The protein is Ran-binding protein 1 homolog a (RANBP1A) of Arabidopsis thaliana (Mouse-ear cress).